A 147-amino-acid chain; its full sequence is Small ribosomal subunit protein uS12 (147 aa).

It belongs to the universal ribosomal protein uS12 family. Part of the 30S ribosomal subunit.

With S4 and S5 plays an important role in translational accuracy. Located at the interface of the 30S and 50S subunits. The chain is Small ribosomal subunit protein uS12 from Pyrococcus horikoshii (strain ATCC 700860 / DSM 12428 / JCM 9974 / NBRC 100139 / OT-3).